The chain runs to 147 residues: Large ribosomal subunit protein uL13 (147 aa).

The protein belongs to the universal ribosomal protein uL13 family. As to quaternary structure, part of the 50S ribosomal subunit.

Functionally, this protein is one of the early assembly proteins of the 50S ribosomal subunit, although it is not seen to bind rRNA by itself. It is important during the early stages of 50S assembly. The sequence is that of Large ribosomal subunit protein uL13 from Nocardia farcinica (strain IFM 10152).